Reading from the N-terminus, the 739-residue chain is Catalase-peroxidase (739 aa).

The interval 1–33 (MSVEHPPIGEANTEPAAGGCPVTGRLRHPLQGG) is disordered. The tryptophyl-tyrosyl-methioninium (Trp-Tyr) (with M-255) cross-link spans 106–229 (WHSAGTYRSS…LAAVQMGLIY (124 aa)). The active-site Proton acceptor is histidine 107. The disordered stretch occupies residues 113–134 (RSSDGRGGANTGQQRFAPLNSW). The segment at residues 229–255 (YVNPEGPNGNPDPLAAAVDIKDTFGRM) is a cross-link (tryptophyl-tyrosyl-methioninium (Tyr-Met) (with W-106)). Histidine 270 contributes to the heme b binding site.

Belongs to the peroxidase family. Peroxidase/catalase subfamily. In terms of assembly, homodimer or homotetramer. Heme b serves as cofactor. In terms of processing, formation of the three residue Trp-Tyr-Met cross-link is important for the catalase, but not the peroxidase activity of the enzyme.

It catalyses the reaction H2O2 + AH2 = A + 2 H2O. It carries out the reaction 2 H2O2 = O2 + 2 H2O. Bifunctional enzyme with both catalase and broad-spectrum peroxidase activity. This chain is Catalase-peroxidase, found in Nocardia farcinica (strain IFM 10152).